The chain runs to 677 residues: DNA ligase (677 aa).

NAD(+) contacts are provided by residues aspartate 35 to aspartate 39, serine 84 to leucine 85, and glutamate 116. Catalysis depends on lysine 118, which acts as the N6-AMP-lysine intermediate. 4 residues coordinate NAD(+): arginine 139, glutamate 176, lysine 295, and lysine 319. Zn(2+) is bound by residues cysteine 413, cysteine 416, cysteine 431, and cysteine 437. Positions leucine 596–glycine 677 constitute a BRCT domain.

It belongs to the NAD-dependent DNA ligase family. LigA subfamily. Mg(2+) serves as cofactor. The cofactor is Mn(2+).

It catalyses the reaction NAD(+) + (deoxyribonucleotide)n-3'-hydroxyl + 5'-phospho-(deoxyribonucleotide)m = (deoxyribonucleotide)n+m + AMP + beta-nicotinamide D-nucleotide.. DNA ligase that catalyzes the formation of phosphodiester linkages between 5'-phosphoryl and 3'-hydroxyl groups in double-stranded DNA using NAD as a coenzyme and as the energy source for the reaction. It is essential for DNA replication and repair of damaged DNA. The chain is DNA ligase from Pseudoalteromonas atlantica (strain T6c / ATCC BAA-1087).